The sequence spans 270 residues: tRNA pseudouridine synthase A (270 aa).

The active-site Nucleophile is the D54. Y112 provides a ligand contact to substrate.

It belongs to the tRNA pseudouridine synthase TruA family. In terms of assembly, homodimer.

The enzyme catalyses uridine(38/39/40) in tRNA = pseudouridine(38/39/40) in tRNA. In terms of biological role, formation of pseudouridine at positions 38, 39 and 40 in the anticodon stem and loop of transfer RNAs. The polypeptide is tRNA pseudouridine synthase A (Bordetella bronchiseptica (strain ATCC BAA-588 / NCTC 13252 / RB50) (Alcaligenes bronchisepticus)).